The sequence spans 278 residues: ATP synthase subunit a (278 aa).

6 consecutive transmembrane segments (helical) span residues 43-63, 104-124, 148-168, 191-211, 222-242, and 249-269; these read TWHI…LWIF, IAPL…MDMI, DVNI…FYSI, IPVN…SLAL, LIFI…TLGV, and LIFH…LTIV.

Belongs to the ATPase A chain family. As to quaternary structure, F-type ATPases have 2 components, CF(1) - the catalytic core - and CF(0) - the membrane proton channel. CF(1) has five subunits: alpha(3), beta(3), gamma(1), delta(1), epsilon(1). CF(0) has three main subunits: a(1), b(2) and c(9-12). The alpha and beta chains form an alternating ring which encloses part of the gamma chain. CF(1) is attached to CF(0) by a central stalk formed by the gamma and epsilon chains, while a peripheral stalk is formed by the delta and b chains.

The protein localises to the cell inner membrane. Its function is as follows. Key component of the proton channel; it plays a direct role in the translocation of protons across the membrane. The protein is ATP synthase subunit a of Shewanella baltica (strain OS185).